The primary structure comprises 140 residues: Profilin-1 (140 aa).

The residue at position 2 (A2) is an N-acetylalanine. S28 bears the Phosphoserine mark. A Glycyl lysine isopeptide (Lys-Gly) (interchain with G-Cter in SUMO2); alternate cross-link involves residue K54. K54 is covalently cross-linked (Glycyl lysine isopeptide (Lys-Gly) (interchain with G-Cter in ubiquitin); alternate). Position 57 is a phosphoserine (S57). K108 is modified (N6-acetyllysine). At Y129 the chain carries Phosphotyrosine. S138 bears the Phosphoserine; by ROCK1 mark.

This sequence belongs to the profilin family. As to quaternary structure, found in a complex with XPO6, Ran, ACTB and PFN1. Interacts with ACTB. Interacts with VASP. Interacts with HTT. Interacts with SH3BGRL. Occurs in many kinds of cells as a complex with monomeric actin in a 1:1 ratio. Interacts with ACTMAP. Post-translationally, phosphorylation at Ser-138 reduces its affinity for G-actin and blocks its interaction with HTT, reducing its ability to inhibit androgen receptor (AR) and HTT aggregation.

Its subcellular location is the cytoplasm. It is found in the cytoskeleton. Functionally, binds to actin and affects the structure of the cytoskeleton. At high concentrations, profilin prevents the polymerization of actin, whereas it enhances it at low concentrations. By binding to PIP2, it inhibits the formation of IP3 and DG. Inhibits androgen receptor (AR) and HTT aggregation and binding of G-actin is essential for its inhibition of AR. The polypeptide is Profilin-1 (PFN1) (Bos taurus (Bovine)).